We begin with the raw amino-acid sequence, 506 residues long: MPTIRPDEISTIIKQQIEQYNQEMQISNVGTVLQVGDGIARIYGLEKVMASELLEFEDGTVGIALNLEEDNVGAVLIGSGRNIQEGSIVKATGRIASIPVGEALLGRVVDPLCNPIDGKGPIHCTETRLIESPAPGIVDRRSVYEPLQTGITAIDALIPIGRGQRELIIGDRQTGKTTLAVDTILNQKGQDVICIYVAIGQKQSNIAQVVNILSERGAMDYSIVVAAGADSPAPLQWLAPYCGATIAEYFMYQGKHTLVVYDDLSKQAVAYRQMSLLLRRPPGREAYPGDVFYLHSRLLERAAKLNSRLGEGSMTALPIVETQANDVSAYIPTNVISITDGQIFLESDLFNAGIRPAINVGISVSRVGSAAQTKAMKKVAGSIKVELAQYRDLEAFAQFASDLDEATQKQLARGQRLQEILKQPQYSPLSLDQQVAIIYAGTRGYLDDIPVEKVSSFKQGLLSYLGTAHPKYGEIVLSTKQLTDEAEEILKTAIAEFKQSFLAKAA.

170–177 (GDRQTGKT) is an ATP binding site.

Belongs to the ATPase alpha/beta chains family. As to quaternary structure, F-type ATPases have 2 components, CF(1) - the catalytic core - and CF(0) - the membrane proton channel. CF(1) has five subunits: alpha(3), beta(3), gamma(1), delta(1), epsilon(1). CF(0) has four main subunits: a(1), b(1), b'(1) and c(9-12).

It localises to the cellular thylakoid membrane. The enzyme catalyses ATP + H2O + 4 H(+)(in) = ADP + phosphate + 5 H(+)(out). Functionally, produces ATP from ADP in the presence of a proton gradient across the membrane. The alpha chain is a regulatory subunit. In Synechococcus sp. (strain JA-3-3Ab) (Cyanobacteria bacterium Yellowstone A-Prime), this protein is ATP synthase subunit alpha.